Consider the following 326-residue polypeptide: tRNA-modifying protein YgfZ (326 aa).

Positions 27 and 189 each coordinate folate.

It belongs to the tRNA-modifying YgfZ family.

The protein localises to the cytoplasm. Functionally, folate-binding protein involved in regulating the level of ATP-DnaA and in the modification of some tRNAs. It is probably a key factor in regulatory networks that act via tRNA modification, such as initiation of chromosomal replication. The protein is tRNA-modifying protein YgfZ of Escherichia coli O17:K52:H18 (strain UMN026 / ExPEC).